The chain runs to 524 residues: RNA-directed RNA polymerase (524 aa).

The region spanning 220–340 is the RdRp catalytic domain; the sequence is QSIAQIDFSS…NFETALCRQE (121 aa).

It carries out the reaction RNA(n) + a ribonucleoside 5'-triphosphate = RNA(n+1) + diphosphate. Functionally, RNA-dependent RNA polymerase which replicates the viral genome. This chain is RNA-directed RNA polymerase, found in Cryptosporidium parvum.